A 73-amino-acid polypeptide reads, in one-letter code: Large ribosomal subunit protein bL31 (73 aa).

The protein belongs to the bacterial ribosomal protein bL31 family. Type A subfamily. Part of the 50S ribosomal subunit. Contacts protein L9.

In terms of biological role, binds the 23S rRNA and interacts with the tRNA in the E site. This Deinococcus radiodurans (strain ATCC 13939 / DSM 20539 / JCM 16871 / CCUG 27074 / LMG 4051 / NBRC 15346 / NCIMB 9279 / VKM B-1422 / R1) protein is Large ribosomal subunit protein bL31 (rpmE).